The chain runs to 284 residues: MAIDAQKLVVVIVIVVVPLLFKFIIGPKTKPVLDPKRNDFQSFPLVEKTILTHNTSMYKFGLPHADDVLGLPIGQHIVIKANINGKDITRSYTPTSLDGDTKGNFELLVKSYPTGNVSKMIGELKIGDSIQIKGPRGNYHYERNCRSHLGMIAGGTGIAPMYQIMKAIAMDPHDTTKVSLVFGNVHEEDILLKKELEALVAMKPSQFKIVYYLDSPDREDWTGGVGYITKDVIKEHLPAATMDNVQILICGPPAMVASVRRSTVDLGFRRSKPLSKMEDQVFVF.

Residues 7–27 form a helical membrane-spanning segment; sequence KLVVVIVIVVVPLLFKFIIGP. In terms of domain architecture, FAD-binding FR-type spans 38–142; that stretch reads NDFQSFPLVE…KGPRGNYHYE (105 aa). FAD contacts are provided by residues 122-137 and 148-180; these read GELKIGDSIQIKGPRG and HLGMIAGGTGIAPMYQIMKAIAMDPHDTTKVSL.

This sequence belongs to the flavoprotein pyridine nucleotide cytochrome reductase family. As to quaternary structure, monomer. Component of the 2-(3-amino-3-carboxypropyl)histidine synthase complex composed of DPH1, DPH2, KTI11/DPH3 and a NADH-dependent reductase, predominantly CBR1. Interacts with KTI11/DPH3. Interacts with STE20. It depends on FAD as a cofactor.

The protein localises to the mitochondrion outer membrane. It carries out the reaction 2 Fe(III)-[cytochrome b5] + NADH = 2 Fe(II)-[cytochrome b5] + NAD(+) + H(+). The catalysed reaction is 2 Fe(3+)-[Dph3] + NADH = 2 Fe(2+)-[Dph3] + NAD(+) + H(+). The protein operates within protein modification; peptidyl-diphthamide biosynthesis. Its activity is regulated as follows. Competitively inhibited by NAD(+). Inhibited by mercurials such as p-chloromercuribenzoate (PCMB) and HgCl(2). Enzymatic activity increases under anaerobic conditions. Its function is as follows. NADH-dependent reductase for KTI11/DPH3 and cytochrome b5. Required for the first step of diphthamide biosynthesis, a post-translational modification of histidine which occurs in elongation factor 2. DPH1 and DPH2 transfer a 3-amino-3-carboxypropyl (ACP) group from S-adenosyl-L-methionine (SAM) to a histidine residue, the reaction is assisted by a reduction system comprising KTI11/DPH3 and a NADH-dependent reductase, predominantly CBR1. By reducing KTI11/DPH3, also involved in the formation of the tRNA wobble base modification mcm5s 2U (5-methoxycarbonylmethyl-2-thiouridine), mediated by the elongator complex. The cytochrome b5/NADH cytochrome b5 reductase electron transfer system supports the catalytic activity of several sterol biosynthetic enzymes. Plays a role in bud morphology. In Saccharomyces cerevisiae (strain ATCC 204508 / S288c) (Baker's yeast), this protein is NADH-cytochrome b5 reductase 1 (CBR1).